Consider the following 243-residue polypeptide: Octanoyltransferase (243 aa).

Residues 49–227 (PLAPQAVWLL…SLSDRFGLVW (179 aa)) form the BPL/LPL catalytic domain. Substrate is bound by residues 91 to 98 (RGGEVTHH), 158 to 160 (AIG), and 171 to 173 (GLA). Cysteine 189 acts as the Acyl-thioester intermediate in catalysis.

It belongs to the LipB family.

Its subcellular location is the cytoplasm. The enzyme catalyses octanoyl-[ACP] + L-lysyl-[protein] = N(6)-octanoyl-L-lysyl-[protein] + holo-[ACP] + H(+). It participates in protein modification; protein lipoylation via endogenous pathway; protein N(6)-(lipoyl)lysine from octanoyl-[acyl-carrier-protein]: step 1/2. Its function is as follows. Catalyzes the transfer of endogenously produced octanoic acid from octanoyl-acyl-carrier-protein onto the lipoyl domains of lipoate-dependent enzymes. Lipoyl-ACP can also act as a substrate although octanoyl-ACP is likely to be the physiological substrate. The chain is Octanoyltransferase from Prochlorococcus marinus (strain MIT 9313).